Consider the following 458-residue polypeptide: ATP synthase subunit beta (458 aa).

Position 148–155 (148–155 (GGAGVGKT)) interacts with ATP.

This sequence belongs to the ATPase alpha/beta chains family. As to quaternary structure, F-type ATPases have 2 components, CF(1) - the catalytic core - and CF(0) - the membrane proton channel. CF(1) has five subunits: alpha(3), beta(3), gamma(1), delta(1), epsilon(1). CF(0) has three main subunits: a(1), b(2) and c(9-12). The alpha and beta chains form an alternating ring which encloses part of the gamma chain. CF(1) is attached to CF(0) by a central stalk formed by the gamma and epsilon chains, while a peripheral stalk is formed by the delta and b chains.

The protein localises to the cell inner membrane. The catalysed reaction is ATP + H2O + 4 H(+)(in) = ADP + phosphate + 5 H(+)(out). Its function is as follows. Produces ATP from ADP in the presence of a proton gradient across the membrane. The catalytic sites are hosted primarily by the beta subunits. This chain is ATP synthase subunit beta, found in Francisella tularensis subsp. mediasiatica (strain FSC147).